The sequence spans 645 residues: Glucans biosynthesis glucosyltransferase H (645 aa).

Over residues 1-12 (MDGTVTLSSTPT) the composition is skewed to polar residues. A disordered region spans residues 1 to 22 (MDGTVTLSSTPTAIPPVSALDA). 7 helical membrane-spanning segments follow: residues 64-84 (LIGG…SVLW), 98-118 (LFTL…AGFV), 423-443 (APMW…GVGI), 465-485 (AIWI…LGYI), 504-524 (AVSI…VMYL), 559-579 (YGGL…VSPA), and 580-600 (LAAW…VVAL).

It belongs to the glycosyltransferase 2 family. OpgH subfamily.

Its subcellular location is the cell inner membrane. It participates in glycan metabolism; osmoregulated periplasmic glucan (OPG) biosynthesis. Its function is as follows. Involved in the biosynthesis of osmoregulated periplasmic glucans (OPGs). This Xanthomonas oryzae pv. oryzae (strain MAFF 311018) protein is Glucans biosynthesis glucosyltransferase H.